We begin with the raw amino-acid sequence, 462 residues long: MAPGRAVAGLLLLAATSLGHPSEGPELAFSEDVLSVFGANRSLSAAQLGRLLERLGAASQQGALDLGQLHFNQCLSAEDIFSLHGFSNVTQITSSNFSAICPAILQQLNFHPCEDLRKHNAKPSLSEVWGYGFLSVTIINLASLLGLILTPLIKKSYFPKILTYFVGLAIGTLFSNAIFQLIPEAFGFNPKIDNYVEKAVAVFGGFYMLFFVERTLKMLLKTYGQNDHTHFRNDDFGSKEKTHQPKTLPLPAVNGVTCYANPAVTEPNGHIHFDTVSVVSLQDGKTEPSSCTCLKGPKLSEIGTIAWMITLCDALHNFIDGLAIGASCTLSLLQGLSTSIAILCEEFPHELGDFVILLNAGMSTRQALLFNFLSACSCYVGLAFGILVGNNFAPNIIFALAGGMFLYISLADMFPEMNDMLREKVTGRQTDFTFFMIQNAGMLTGFTAILLITLYAGDIELQ.

The first 19 residues, 1 to 19 (MAPGRAVAGLLLLAATSLG), serve as a signal peptide directing secretion. Over 20-132 (HPSEGPELAF…PSLSEVWGYG (113 aa)) the chain is Extracellular. N-linked (GlcNAc...) asparagine glycosylation is found at Asn40, Asn88, and Asn96. Residues 133 to 153 (FLSVTIINLASLLGLILTPLI) traverse the membrane as a helical segment. Residues 154–160 (KKSYFPK) are Cytoplasmic-facing. A helical transmembrane segment spans residues 161-181 (ILTYFVGLAIGTLFSNAIFQL). Topologically, residues 182 to 191 (IPEAFGFNPK) are extracellular. The chain crosses the membrane as a helical span at residues 192-212 (IDNYVEKAVAVFGGFYMLFFV). Residues 213 to 367 (ERTLKMLLKT…LNAGMSTRQA (155 aa)) are Cytoplasmic-facing. The short motif at 345–350 (EEFPHE) is the XEXPHE-motif element. The helical transmembrane segment at 368–388 (LLFNFLSACSCYVGLAFGILV) threads the bilayer. Topologically, residues 389 to 390 (GN) are extracellular. A helical membrane pass occupies residues 391 to 411 (NFAPNIIFALAGGMFLYISLA). The Cytoplasmic portion of the chain corresponds to 412 to 431 (DMFPEMNDMLREKVTGRQTD). The chain crosses the membrane as a helical span at residues 432 to 452 (FTFFMIQNAGMLTGFTAILLI). Residues 453 to 462 (TLYAGDIELQ) are Extracellular-facing.

This sequence belongs to the ZIP transporter (TC 2.A.5) family. In terms of assembly, homodimer. N-glycosylated. N-glycosylation is not required for proper iron and zinc transport. As to expression, ubiquitously expressed.

It is found in the cell membrane. The protein resides in the apical cell membrane. It localises to the basolateral cell membrane. Its subcellular location is the lysosome membrane. It catalyses the reaction Zn(2+)(out) + 2 hydrogencarbonate(out) = Zn(2+)(in) + 2 hydrogencarbonate(in). The enzyme catalyses selenite(out) + Zn(2+)(out) + hydrogencarbonate(out) = selenite(in) + Zn(2+)(in) + hydrogencarbonate(in). The catalysed reaction is Mn(2+)(out) + 2 hydrogencarbonate(out) = Mn(2+)(in) + 2 hydrogencarbonate(in). It carries out the reaction Cd(2+)(out) + 2 hydrogencarbonate(out) = Cd(2+)(in) + 2 hydrogencarbonate(in). It catalyses the reaction Fe(2+)(out) + 2 hydrogencarbonate(out) = Fe(2+)(in) + 2 hydrogencarbonate(in). The enzyme catalyses Co(2+)(out) + 2 hydrogencarbonate(out) = Co(2+)(in) + 2 hydrogencarbonate(in). In terms of biological role, electroneutral divalent metal cation:bicarbonate symporter of the plasma membrane mediating the cellular uptake of zinc and manganese, two divalent metal cations important for development, tissue homeostasis and immunity. Transports an electroneutral complex composed of a divalent metal cation and two bicarbonate anions or alternatively a bicarbonate and a selenite anion. Thereby, it also contributes to the cellular uptake of selenium, an essential trace metal and micronutrient. Also imports cadmium a non-essential metal which is cytotoxic and carcinogenic. May also transport iron and cobalt through membranes. Through zinc import, indirectly regulates the metal-dependent transcription factor MTF1 and the expression of some metalloproteases involved in cartilage catabolism and also probably heart development. Also indirectly regulates the expression of proteins involved in cell morphology and cytoskeleton organization. Indirectly controls innate immune function and inflammatory response by regulating zinc cellular uptake which in turn modulates the expression of genes specific of these processes. Protects, for instance, cells from injury and death at the onset of inflammation. By regulating zinc influx into monocytes also directly modulates their adhesion to endothelial cells and arteries. Reclaims manganese from the bile at the apical membrane of hepatocytes, thereby regulating the activity of the manganese-dependent enzymes through the systemic levels of the nutrient. Also participates in manganese reabsorption in the proximal tubule of the kidney. By mediating the extracellular uptake of manganese by cells of the blood-brain barrier, may also play a role in the transport of the micronutrient to the brain. With manganese cellular uptake also participates in mitochondrial proper function. Finally, also probably functions intracellularly, translocating zinc from lysosome to cytosol to indirectly enhance the expression of specific genes during TCR-mediated T cell activation. The protein is Metal cation symporter ZIP8 of Mus musculus (Mouse).